We begin with the raw amino-acid sequence, 83 residues long: Cytochrome b559 subunit alpha (83 aa).

A helical transmembrane segment spans residues 21 to 35 (VIHSITIPSLFIAGW). Residue His-23 coordinates heme.

This sequence belongs to the PsbE/PsbF family. Heterodimer of an alpha subunit and a beta subunit. PSII is composed of 1 copy each of membrane proteins PsbA, PsbB, PsbC, PsbD, PsbE, PsbF, PsbH, PsbI, PsbJ, PsbK, PsbL, PsbM, PsbT, PsbX, PsbY, PsbZ, Psb30/Ycf12, at least 3 peripheral proteins of the oxygen-evolving complex and a large number of cofactors. It forms dimeric complexes. Requires heme b as cofactor.

It localises to the plastid. The protein localises to the chloroplast thylakoid membrane. This b-type cytochrome is tightly associated with the reaction center of photosystem II (PSII). PSII is a light-driven water:plastoquinone oxidoreductase that uses light energy to abstract electrons from H(2)O, generating O(2) and a proton gradient subsequently used for ATP formation. It consists of a core antenna complex that captures photons, and an electron transfer chain that converts photonic excitation into a charge separation. The protein is Cytochrome b559 subunit alpha of Anthoceros angustus (Hornwort).